A 451-amino-acid polypeptide reads, in one-letter code: Phosphoglucosamine mutase (451 aa).

Catalysis depends on S104, which acts as the Phosphoserine intermediate. Mg(2+) is bound by residues S104, D249, D251, and D253. S104 is subject to Phosphoserine.

The protein belongs to the phosphohexose mutase family. Mg(2+) is required as a cofactor. Post-translationally, activated by phosphorylation.

It carries out the reaction alpha-D-glucosamine 1-phosphate = D-glucosamine 6-phosphate. Catalyzes the conversion of glucosamine-6-phosphate to glucosamine-1-phosphate. The chain is Phosphoglucosamine mutase from Psychrobacter sp. (strain PRwf-1).